Reading from the N-terminus, the 211-residue chain is Ras-related protein RABB1c (211 aa).

Position 2 is an N-acetylserine (serine 2). Position 13 to 21 (13 to 21 (GDTGVGKSC)) interacts with GTP. Positions 35–43 (HDLTIGVEF) match the Effector region motif. Residues 61–65 (DTAGQ), 119–122 (NKCD), and 149–151 (SAK) contribute to the GTP site. 2 S-geranylgeranyl cysteine lipidation sites follow: cysteine 209 and cysteine 210.

Belongs to the small GTPase superfamily. Rab family.

Its subcellular location is the cell membrane. In terms of biological role, intracellular vesicle trafficking and protein transport. This chain is Ras-related protein RABB1c (RABB1C), found in Arabidopsis thaliana (Mouse-ear cress).